The primary structure comprises 458 residues: Argininosuccinate lyase (458 aa).

Belongs to the lyase 1 family. Argininosuccinate lyase subfamily.

Its subcellular location is the cytoplasm. The catalysed reaction is 2-(N(omega)-L-arginino)succinate = fumarate + L-arginine. Its pathway is amino-acid biosynthesis; L-arginine biosynthesis; L-arginine from L-ornithine and carbamoyl phosphate: step 3/3. The polypeptide is Argininosuccinate lyase (Citrifermentans bemidjiense (strain ATCC BAA-1014 / DSM 16622 / JCM 12645 / Bem) (Geobacter bemidjiensis)).